The chain runs to 290 residues: Manganese efflux system protein MneS (290 aa).

Transmembrane regions (helical) follow at residues 15–35 (LVSI…GYLF), 39–61 (ALTA…LIGL), 82–102 (IASL…LFSA), 113–133 (TPDM…LIVY), 159–179 (AFVS…LAWI), and 181–201 (TVTA…IFKE).

The protein belongs to the cation diffusion facilitator (CDF) transporter (TC 2.A.4) family.

The protein localises to the cell membrane. Its function is as follows. Secondary manganese efflux system. May prevent manganese intoxication. The sequence is that of Manganese efflux system protein MneS from Bacillus subtilis (strain 168).